Consider the following 547-residue polypeptide: Chaperonin GroEL (547 aa).

Residues 29–32, Lys50, 86–90, Gly414, 478–480, and Asp494 each bind ATP; these read TLGP, DGTTT, and NAA.

It belongs to the chaperonin (HSP60) family. Forms a cylinder of 14 subunits composed of two heptameric rings stacked back-to-back. Interacts with the co-chaperonin GroES.

It localises to the cytoplasm. The enzyme catalyses ATP + H2O + a folded polypeptide = ADP + phosphate + an unfolded polypeptide.. Functionally, together with its co-chaperonin GroES, plays an essential role in assisting protein folding. The GroEL-GroES system forms a nano-cage that allows encapsulation of the non-native substrate proteins and provides a physical environment optimized to promote and accelerate protein folding. The polypeptide is Chaperonin GroEL (Saccharophagus degradans (strain 2-40 / ATCC 43961 / DSM 17024)).